A 424-amino-acid polypeptide reads, in one-letter code: Histidine--tRNA ligase (424 aa).

It belongs to the class-II aminoacyl-tRNA synthetase family. As to quaternary structure, homodimer.

Its subcellular location is the cytoplasm. It carries out the reaction tRNA(His) + L-histidine + ATP = L-histidyl-tRNA(His) + AMP + diphosphate + H(+). This Salmonella arizonae (strain ATCC BAA-731 / CDC346-86 / RSK2980) protein is Histidine--tRNA ligase.